A 231-amino-acid polypeptide reads, in one-letter code: 2-C-methyl-D-erythritol 4-phosphate cytidylyltransferase (231 aa).

Belongs to the IspD/TarI cytidylyltransferase family. IspD subfamily.

The catalysed reaction is 2-C-methyl-D-erythritol 4-phosphate + CTP + H(+) = 4-CDP-2-C-methyl-D-erythritol + diphosphate. It functions in the pathway isoprenoid biosynthesis; isopentenyl diphosphate biosynthesis via DXP pathway; isopentenyl diphosphate from 1-deoxy-D-xylulose 5-phosphate: step 2/6. Its function is as follows. Catalyzes the formation of 4-diphosphocytidyl-2-C-methyl-D-erythritol from CTP and 2-C-methyl-D-erythritol 4-phosphate (MEP). The chain is 2-C-methyl-D-erythritol 4-phosphate cytidylyltransferase from Fusobacterium nucleatum subsp. nucleatum (strain ATCC 25586 / DSM 15643 / BCRC 10681 / CIP 101130 / JCM 8532 / KCTC 2640 / LMG 13131 / VPI 4355).